The following is a 184-amino-acid chain: Acireductone dioxygenase (184 aa).

Histidine 97, histidine 99, glutamate 103, and histidine 141 together coordinate Fe(2+). The Ni(2+) site is built by histidine 97, histidine 99, glutamate 103, and histidine 141.

The protein belongs to the acireductone dioxygenase (ARD) family. In terms of assembly, monomer. Requires Fe(2+) as cofactor. Ni(2+) is required as a cofactor.

The enzyme catalyses 1,2-dihydroxy-5-(methylsulfanyl)pent-1-en-3-one + O2 = 3-(methylsulfanyl)propanoate + CO + formate + 2 H(+). It catalyses the reaction 1,2-dihydroxy-5-(methylsulfanyl)pent-1-en-3-one + O2 = 4-methylsulfanyl-2-oxobutanoate + formate + 2 H(+). The protein operates within amino-acid biosynthesis; L-methionine biosynthesis via salvage pathway; L-methionine from S-methyl-5-thio-alpha-D-ribose 1-phosphate: step 5/6. Functionally, catalyzes 2 different reactions between oxygen and the acireductone 1,2-dihydroxy-3-keto-5-methylthiopentene (DHK-MTPene) depending upon the metal bound in the active site. Fe-containing acireductone dioxygenase (Fe-ARD) produces formate and 2-keto-4-methylthiobutyrate (KMTB), the alpha-ketoacid precursor of methionine in the methionine recycle pathway. Ni-containing acireductone dioxygenase (Ni-ARD) produces methylthiopropionate, carbon monoxide and formate, and does not lie on the methionine recycle pathway. This is Acireductone dioxygenase from Parvibaculum lavamentivorans (strain DS-1 / DSM 13023 / NCIMB 13966).